Consider the following 679-residue polypeptide: UvrABC system protein B (679 aa).

Residues 25–176 (KGVNTGKEFQ…NLRSYLRSLV (152 aa)) form the Helicase ATP-binding domain. An ATP-binding site is contributed by 38–45 (GATGTGKT). Positions 91-114 (YYDYYQPEAYVPVSDTYIAKTASI) match the Beta-hairpin motif. Positions 429–583 (QIEDLLSEIR…KKYNQVNGIT (155 aa)) constitute a Helicase C-terminal domain. Positions 639-674 (PDLIEKLEIKMKDAAKELNFEEAANLRDRIKKLRQK) constitute a UVR domain.

It belongs to the UvrB family. In terms of assembly, forms a heterotetramer with UvrA during the search for lesions. Interacts with UvrC in an incision complex.

The protein resides in the cytoplasm. In terms of biological role, the UvrABC repair system catalyzes the recognition and processing of DNA lesions. A damage recognition complex composed of 2 UvrA and 2 UvrB subunits scans DNA for abnormalities. Upon binding of the UvrA(2)B(2) complex to a putative damaged site, the DNA wraps around one UvrB monomer. DNA wrap is dependent on ATP binding by UvrB and probably causes local melting of the DNA helix, facilitating insertion of UvrB beta-hairpin between the DNA strands. Then UvrB probes one DNA strand for the presence of a lesion. If a lesion is found the UvrA subunits dissociate and the UvrB-DNA preincision complex is formed. This complex is subsequently bound by UvrC and the second UvrB is released. If no lesion is found, the DNA wraps around the other UvrB subunit that will check the other stand for damage. The sequence is that of UvrABC system protein B from Prochlorococcus marinus (strain MIT 9301).